Here is a 1225-residue protein sequence, read N- to C-terminus: ATP-dependent helicase/nuclease subunit A (1225 aa).

Positions 11 to 478 (AQWTDAQWKS…IDLSKNFRSR (468 aa)) constitute a UvrD-like helicase ATP-binding domain. An ATP-binding site is contributed by 32 to 39 (AAAGSGKT). The 312-residue stretch at 479 to 790 (KEVLATTNYL…RMMTVHSSKG (312 aa)) folds into the UvrD-like helicase C-terminal domain. The segment covering 999–1014 (EKPSKQSVSELKRQLE) has biased composition (basic and acidic residues). Residues 999–1018 (EKPSKQSVSELKRQLETEES) form a disordered region.

It belongs to the helicase family. AddA subfamily. Heterodimer of AddA and AddB/RexB. Requires Mg(2+) as cofactor.

The catalysed reaction is Couples ATP hydrolysis with the unwinding of duplex DNA by translocating in the 3'-5' direction.. The enzyme catalyses ATP + H2O = ADP + phosphate + H(+). Its function is as follows. The heterodimer acts as both an ATP-dependent DNA helicase and an ATP-dependent, dual-direction single-stranded exonuclease. Recognizes the chi site generating a DNA molecule suitable for the initiation of homologous recombination. The AddA nuclease domain is required for chi fragment generation; this subunit has the helicase and 3' -&gt; 5' nuclease activities. The chain is ATP-dependent helicase/nuclease subunit A from Staphylococcus haemolyticus (strain JCSC1435).